A 101-amino-acid polypeptide reads, in one-letter code: Small ribosomal subunit protein bS18c (101 aa).

Belongs to the bacterial ribosomal protein bS18 family. In terms of assembly, part of the 30S ribosomal subunit.

It localises to the plastid. The protein localises to the chloroplast. This is Small ribosomal subunit protein bS18c from Lactuca sativa (Garden lettuce).